We begin with the raw amino-acid sequence, 3001 residues long: MEDDDERKLPEADIANPLHNRIEAFDTTLQGISSADRAFKDDDFEQVSLGDQEKAANESQGDLQEPGSFSNSDHGRSSFGGTEVVTYQLSGTQEMYDLMPMDDVQSDRLSSPGPEREAAYSMQQSLSETSLDSVHHPESGYSPVHSPQKPKPKATVPNVSPELLHLVDSAIMGKPESLDKLKNVVCGIENFGCGEESEATAFLVVDSLIATMGGVESFEEDEDSNPPSVMLNSRAAIVSGELIPWLPGLGDNVNFMSPRTRMVRGLLVILRSCTRNRAMCSTAGLLGVLLRSVEAIISKDVDMKWNAAAILLLCIQHLAGHSLSVDDLHRWLQVIKAAITTAWSSPLMLALEKAMSGKESRGPACTFEFDGESSGLLGPGESRWPFTNGYAFATWIYIESFADTLNAATAAAAIAAAAAAKSGKTSAMSAAAAASALAGEGTAHMPRLFSFLSADNQGIEAYFHAQFLVVESGSGKGRKSSLHFTHAFKPQCWYFIGLEHSCKQGLLGKAESELRLYIDGSLYESRPFDFPRISKPLSFCCIGTNPPPTMAGLQRRRRQCPLFAEMGPVYIFKEPIGPERMARLASRGGDVLPCFGNGAGLPWLATNDYVRNKAEESSILDADIGGYTHLLYHPCLLSGRFCPDASLSGAAGTLRRPAEVLGQVHVATRMKPVESFWALAYGGPMSLLPLTVSSVHKDSLEPCLGNLPLSLSTVTLAAPVFRIMSVAIQHPGNNEELCRTQGPEILARILSYLLHSLASLDRKHDGVGEEELVAAIVSLCQSQKINHVLKVQLFRTLLLDLKIWSLCNYGLQKKLLSSLQDMVFTEATAMRDAEAIQLLLDGCRRCYWMISEKDSETTFPLDGNTRQMGELNALIDELLVIIELLMGAASPSLAADDLRRLLGFIIDSPQPNQVHCKFNANASAVCSLLALLLIKLVPLFRSQIMYMNSRKPSYNGLHGEMWVISRENGLTDCTRLCWLVVQPNAARAQMFAEVFITSGGIETLLVLLQREAKTGEDNVLAMGRSGKRSSTDPSEKSPYNESGSVKQLDSNPHDNEIGFDLPGPDGNSVEDDNVGSLNVPESVRQEKEHGSTPVVCDSDSVSISNSINTERLSAEIGGISLSISADSARNNVYNVDNSDAVVVGIIRLIGALISSGHLTFDFDARSDVTSNILGSGLHENGGTMFDDKVALLLFALLKAFQAAPNRLMTDNVYTTLLGASINASSTEDGLNFYDSGHRFEHSQLLLVLLRSLPSASKALQSRALQDLLFLACSHPENRSSLTTMEEWPEWILEILISNYEKDAGKQSASVGSCEVEDMIHNFLIIMLEHSMRQKDGWKDIEATIHCAEWLSIVGGSSTGEQRIRREESLPIFKRRLFGGLLDFAARELQAQTQVIAAAAAGVAAEGLAPKDAKAGAENAAQLSVFLVENAIVILMLVEDHLRSQSKQTCATNAVASPSPLKKRTSTLTAIGESSEISSSRASLSSDSGKVPLDILASMADSSGQISAVAMERLTAASAAEPYESVSCAFVSYGSCAMDLAEGWKYRSRLWYGVGLPSKPSSLGGGGSGSDSWKSTLEKDAHGNWIELPLVKKSVSMLQALLLDESGLGGGLGIGGGSGTGMGGMTALYQLLDSDQPFLCMLRMVLLSMREEDYGEDNMLMRNLSSERSSGNSVTLDSGSQMSMRQSRSALLWSVLSPIINMPISDSKRQRVLVTACVLYSEVWHAISRDRRPLRKQYIEAIVPPFIAVLRRWRPLLAGIHELATADGMNPLVVDDRALAADALPVEGALSMVTPEWAAAFASPPAAMSLAMIAAGAAGWEAPPPPTPSHLRRDSSMLERKTAKLQTFSSFQKPLEPPNNNAPPRPRDKAAAKAAALAAARDLERNAKIGSGRGLSAVAMATSAQRRNIGDMERLQRWNTSEAMGVAWMECLQPVDTKSVYGKDFNALSYKFIAVLVASFALARNMQRSEIDRRMQDDIIAANRLCLGSRAWRKLIRYLAEMRCFFGPFGDGICSPERVFWKLDSMESFSRMRQSIRRNYSGTDHHGAAADYDDQTETKSDNGSKGSQSNPPVVAAEVILMEIAYEEDEHGEGDQLDVKGNAEEHKRDEGRISGSHEHASRTSAGNSDPRTSNDLEMVRDSSVVAPGFVPSELDERILLELPTSMVRPLRVVKGTFQITTRRINFIVDNRESQNLADHSDESQSGDQEKDRSWPMSSLHQIYSRRYLLRRSALELFMVDRSNFFFDFGNTEGRRNAYRAIVQARPPHLNNIYLATQRPEQLLRRTQLMERWARWEISNFEYLMQLNTLAGRSYNDITQYPVFPWIISDNSSESLDLSNPSTFRDLSKPIGALNPERLKKFQERYSSFEDPVIPKFHYGSHYSSAGAVLYYLARVEPFTTLSIQLQGGKFDHADRMFSDFPGTWNGVLEDMSDVKELVPELFYLPEVLTNENSIDFGTTQLGEKLDAVKLPPWAKNPVDFVHKQRRALESEHVSAHLHEWIDLIFGYKQRGKEAIMANNVFFYITYEGTVDIDKITDPVQQRATQDQIAYFGQTPSQLLTVPHMKRMPLKDVLHMQTIFRNPKEIKPYTVQTPERCNLPASAIQASSDSVVIVDMNVPAARVAQHKWQPNTPDGQGTPFLFHHGKATTTSTSGSLMRMFKGPASSGTGDWQFPQAQAFASSGIRSSSVIAITSDGEIITGGHADNSIKLVSSDGAKTLETAFGHCAPVTCLALSPDNNFLVTGSRDSTVLLWRIHKAFTSRTSVSEPSTGSGAPSSTSNTNLANTLANKGKKCRLEGPIQVLRGHRRELVCCCVSSDQGVVVSSSESSDVLLHSIRKGRLIRRLVGVKADSLCISSDGVIMAWSSSEGSISVFTINGVLIAKAKFPLFCSVGCMEISMDGQNALIGMNSCSNSDYSSSNDTSKDSKEIERLDVPSPSICFLNLYTLQVFHVLKLGQGQDITALALNVDNTNLLVSTEDKQLIIFTDPALSLKVVDQMLKLGWE.

7 disordered regions span residues 43-80 (DFEQVSLGDQEKAANESQGDLQEPGSFSNSDHGRSSFG), 103-156 (DVQS…KATV), 1018-1076 (NVLA…NVGS), 1846-1868 (TFSSFQKPLEPPNNNAPPRPRDK), 2039-2071 (YSGTDHHGAAADYDDQTETKSDNGSKGSQSNPP), 2101-2132 (AEEHKRDEGRISGSHEHASRTSAGNSDPRTSN), and 2193-2212 (NLADHSDESQSGDQEKDRSW). At S48 the chain carries Phosphoserine. Polar residues-rich tracts occupy residues 57 to 72 (NESQGDLQEPGSFSNS), 121 to 132 (SMQQSLSETSLD), and 1037 to 1050 (SPYNESGSVKQLDS). Residues 1854–1863 (LEPPNNNAPP) show a composition bias toward pro residues. Residues 2101 to 2119 (AEEHKRDEGRISGSHEHAS) are compositionally biased toward basic and acidic residues. Over residues 2120–2129 (RTSAGNSDPR) the composition is skewed to polar residues. One can recognise a BEACH-type PH domain in the interval 2151–2260 (ELDERILLEL…GRRNAYRAIV (110 aa)). The span at 2196-2211 (DHSDESQSGDQEKDRS) shows a compositional bias: basic and acidic residues. The BEACH domain maps to 2275-2564 (QRPEQLLRRT…QLLTVPHMKR (290 aa)). 5 WD repeats span residues 2679–2718 (SGIRSSSVIAITSDGEIITGGHADNSIKLVSSDGAKTLET), 2721–2760 (GHCAPVTCLALSPDNNFLVTGSRDSTVLLWRIHKAFTSRT), 2802–2841 (GHRRELVCCCVSSDQGVVVSSSESSDVLLHSIRKGRLIRR), 2842–2881 (LVGVKADSLCISSDGVIMAWSSSEGSISVFTINGVLIAKA), and 2953–2992 (GQGQDITALALNVDNTNLLVSTEDKQLIIFTDPALSLKVV).

This chain is BEACH domain-containing protein C2, found in Arabidopsis thaliana (Mouse-ear cress).